We begin with the raw amino-acid sequence, 261 residues long: Zinc import ATP-binding protein ZnuC (261 aa).

Positions 6–221 (IRLEKVAVRF…PAFVELFGNN (216 aa)) constitute an ABC transporter domain. 38-45 (GPNGAGKT) is an ATP binding site.

Belongs to the ABC transporter superfamily. Zinc importer (TC 3.A.1.15.5) family. The complex is composed of two ATP-binding proteins (ZnuC), two transmembrane proteins (ZnuB) and a solute-binding protein (ZnuA).

The protein localises to the cell inner membrane. It catalyses the reaction Zn(2+)(out) + ATP(in) + H2O(in) = Zn(2+)(in) + ADP(in) + phosphate(in) + H(+)(in). Part of the ABC transporter complex ZnuABC involved in zinc import. Responsible for energy coupling to the transport system. This is Zinc import ATP-binding protein ZnuC from Pseudomonas fluorescens (strain Pf0-1).